The chain runs to 196 residues: CAG pathogenicity island protein 13 (196 aa).

The chain is CAG pathogenicity island protein 13 (cagS) from Helicobacter pylori (strain ATCC 700392 / 26695) (Campylobacter pylori).